Reading from the N-terminus, the 199-residue chain is UPF0637 protein LACR_1918 (199 aa).

This sequence belongs to the UPF0637 family.

The chain is UPF0637 protein LACR_1918 from Lactococcus lactis subsp. cremoris (strain SK11).